A 78-amino-acid polypeptide reads, in one-letter code: MKLTCVLIIAVLFLTACQLITADYSRDKQEYRAVRLRDAMRYSRVRRQCADLGEECHTRFCCPGLRCEDLQVPTCLMA.

Residues 1 to 22 (MKLTCVLIIAVLFLTACQLITA) form the signal peptide. Positions 23–45 (DYSRDKQEYRAVRLRDAMRYSRV) are excised as a propeptide. Residue Q48 is modified to Pyrrolidone carboxylic acid. 3 cysteine pairs are disulfide-bonded: C49-C62, C56-C67, and C61-C75.

It belongs to the conotoxin O1 superfamily. In terms of tissue distribution, expressed by the venom duct.

It localises to the secreted. The protein is Conotoxin ArMKLT2-0312 of Conus arenatus (Sand-dusted cone).